Here is a 361-residue protein sequence, read N- to C-terminus: Phospho-N-acetylmuramoyl-pentapeptide-transferase (361 aa).

The next 10 membrane-spanning stretches (helical) occupy residues 21-41, 73-93, 97-117, 134-154, 168-188, 200-220, 237-257, 264-284, 289-309, and 338-358; these read YITL…FLVG, TMGG…WADL, FVWV…VDDW, YFWQ…TATV, LVLP…IVGT, GLAI…AYVA, AGEL…FLWF, VFMG…VAVI, IVLF…MLQV, and QVVV…LSTL.

The protein belongs to the glycosyltransferase 4 family. MraY subfamily. Mg(2+) is required as a cofactor.

It localises to the cell inner membrane. The catalysed reaction is UDP-N-acetyl-alpha-D-muramoyl-L-alanyl-gamma-D-glutamyl-meso-2,6-diaminopimeloyl-D-alanyl-D-alanine + di-trans,octa-cis-undecaprenyl phosphate = di-trans,octa-cis-undecaprenyl diphospho-N-acetyl-alpha-D-muramoyl-L-alanyl-D-glutamyl-meso-2,6-diaminopimeloyl-D-alanyl-D-alanine + UMP. The protein operates within cell wall biogenesis; peptidoglycan biosynthesis. Catalyzes the initial step of the lipid cycle reactions in the biosynthesis of the cell wall peptidoglycan: transfers peptidoglycan precursor phospho-MurNAc-pentapeptide from UDP-MurNAc-pentapeptide onto the lipid carrier undecaprenyl phosphate, yielding undecaprenyl-pyrophosphoryl-MurNAc-pentapeptide, known as lipid I. The sequence is that of Phospho-N-acetylmuramoyl-pentapeptide-transferase from Methylobacillus flagellatus (strain ATCC 51484 / DSM 6875 / VKM B-1610 / KT).